The primary structure comprises 196 residues: NADH dehydrogenase [ubiquinone] 1 alpha subcomplex assembly factor 3 (196 aa).

Residues 1 to 93 (MIARTLRTVG…RSVLSWNVNS (93 aa)) constitute a mitochondrion transit peptide.

It belongs to the NDUFAF3 family. In terms of assembly, together with NdufAF4 associates with mitochondrial complex I assembly intermediates during its biogenesis.

The protein resides in the mitochondrion. Involved in the assembly of mitochondrial NADH:ubiquinone oxidoreductase complex (complex I). Together with NdufAF4, involved in biogenesis of complex 1 modules N, Q and P-peripheral, but not the P-distal module. Required for recruitment of the complex I assembly factor Timmdc1 to complex 1 assembly intermediates. In Drosophila melanogaster (Fruit fly), this protein is NADH dehydrogenase [ubiquinone] 1 alpha subcomplex assembly factor 3.